The chain runs to 47 residues: Potassium channel toxin alpha-KTx 7.1 (47 aa).

An N-terminal signal peptide occupies residues 1 to 12 (RGSVDYKDDDDK). Disulfide bonds link Cys16–Cys37, Cys22–Cys42, and Cys26–Cys44.

It belongs to the short scorpion toxin superfamily. Potassium channel inhibitor family. Alpha-KTx 07 subfamily. Expressed by the venom gland.

Its subcellular location is the secreted. Potent inhibitor of the A-type voltage-gated potassium channels. Most potent inhibitor of Kv1.2/KCNA2 channels. Reversibly block the Shaker B potassium-channels (Kv1.1 sub-family). This chain is Potassium channel toxin alpha-KTx 7.1 (PTX-1), found in Pandinus imperator (Emperor scorpion).